A 391-amino-acid polypeptide reads, in one-letter code: Terminal nucleotidyltransferase 5C (391 aa).

Belongs to the TENT family. As to quaternary structure, interacts with BCCIP and PABPC1; the interaction has no effect on TENT5C poly(A) polymerase function. Interacts with PLK4; this interaction leads to the TENT5C recruitment into the centrosome.

It localises to the nucleus. Its subcellular location is the cytoplasm. The protein resides in the cytoskeleton. The protein localises to the microtubule organizing center. It is found in the centrosome. The catalysed reaction is RNA(n) + ATP = RNA(n)-3'-adenine ribonucleotide + diphosphate. Its function is as follows. Catalyzes the transfer of one adenosine molecule from an ATP to an mRNA poly(A) tail bearing a 3'-OH terminal group and enhances mRNA stability and gene expression. Can also elongate RNA oligos ending with uridine molecule, provided that the sequence is adenosine-rich. Mainly targets mRNAs encoding endoplasmic reticulum-targeted protein. In terms of biological role, (Microbial infection) Seems to enhance replication of some viruses, including yellow fever virus, in response to type I interferon. The sequence is that of Terminal nucleotidyltransferase 5C from Homo sapiens (Human).